The sequence spans 356 residues: MSAPVIAIDAMGGDFGPHCIVPASLSCLAENPSLHLVLVGQSSLLEQLVAKHPGVDRARLKIVDAPEMVTMDERPAQALRGKPRSSMRVALEQVRDGGAQACVSAGNTGALMALARQVLKTLPGIDRPAMVTALPTRGAPCLLLDLGANVDCPAEQLYQFAVMGAVAAESLGRQQPRVALLNVGTEEIKGNQQVKLAAALLQQAAGLNYRGFIEGDGLYRGEADVVVCDGFVGNILLKSSEGLAGMLVAKVEALFRRSIAARIVGAVALPLLRRLRAELNPAQYNGASFLGLQGIVVKSHGSAGADGFKAAIRRAAQDVEHDLPAQLRDRLGQFFRVDGSSGGTDDVTARDGWPSN.

Belongs to the PlsX family. In terms of assembly, homodimer. Probably interacts with PlsY.

It localises to the cytoplasm. It catalyses the reaction a fatty acyl-[ACP] + phosphate = an acyl phosphate + holo-[ACP]. The protein operates within lipid metabolism; phospholipid metabolism. Its function is as follows. Catalyzes the reversible formation of acyl-phosphate (acyl-PO(4)) from acyl-[acyl-carrier-protein] (acyl-ACP). This enzyme utilizes acyl-ACP as fatty acyl donor, but not acyl-CoA. In Stutzerimonas stutzeri (strain A1501) (Pseudomonas stutzeri), this protein is Phosphate acyltransferase.